Consider the following 401-residue polypeptide: Type I restriction enzyme EcoprrI specificity subunit (401 aa).

It belongs to the type-I restriction system S methylase family. The type I restriction/modification system is composed of three polypeptides R, M and S; the restriction enzyme has stoichiometry R(2)M(2)S(1) while the methyltransferase is M(2)S(1).

Its function is as follows. The specificity (S) subunit of a type I restriction enzyme; this subunit dictates DNA sequence specificity. The M and S subunits together form a methyltransferase (MTase) that methylates two adenine residues of the sequence 5'-CCAN(7)ATGC-3'. In the presence of the R subunit the complex can also act as an endonuclease, binding to the same target sequence but cutting the DNA some distance from this site. Whether the DNA is cut or modified depends on the methylation state of the target sequence. When the target site is unmodified, the DNA is cut. When the target site is hemimethylated, the complex acts as a maintenance MTase modifying the DNA so that both strands become methylated. After locating a non-methylated recognition site, the enzyme complex serves as a molecular motor that translocates DNA in an ATP-dependent manner until a collision occurs that triggers cleavage. In Escherichia coli, this protein is Type I restriction enzyme EcoprrI specificity subunit (prrB).